The primary structure comprises 305 residues: Carbonic anhydrase 5A, mitochondrial (305 aa).

The N-terminal 38 residues, 1-38 (MLGRNTWKTSAFSFLVEQMWAPLWSRSMRPGRWCSQRS), are a transit peptide targeting the mitochondrion. An Alpha-carbonic anhydrase domain is found at 39–296 (CAWQTSNNTL…LMNRKVWASF (258 aa)). Zn(2+) contacts are provided by H130, H132, and H155.

Belongs to the alpha-carbonic anhydrase family. It depends on Zn(2+) as a cofactor.

It is found in the mitochondrion. It carries out the reaction hydrogencarbonate + H(+) = CO2 + H2O. Its activity is regulated as follows. Activated by L- and D-histidine. Activated by L- and D-phenylalanine. Activated by L-adrenaline. Inhibited by coumarins, sulfonamide derivatives such as acetazolamide and Foscarnet (phosphonoformate trisodium salt). Activated by histamine. Its function is as follows. Mitochondrial carbonic anhydrase that catalyzes the reversible conversion of carbon dioxide to bicarbonate/HCO3. Mitochondria are impermeable to HCO3, and thus this intramitochondrial carbonic anhydrase is pivotal in providing HCO3 for multiple mitochondrial enzymes that catalyze the formation of essential metabolites of intermediary metabolism in the urea and Krebs cycles. The protein is Carbonic anhydrase 5A, mitochondrial of Homo sapiens (Human).